The sequence spans 400 residues: Apolipoprotein N-acyltransferase (400 aa).

5 consecutive transmembrane segments (helical) span residues 16-36, 42-62, 67-87, 97-117, and 123-143; these read AISPLLVSLLGLFSIASVLFV, FGVGFFIGMLWFYWISLGLRY, FLIPLVVIACGIFMGFVFYIG, FAFLLLLSYLTPFGFDWIVPE, and SYIGVDKLSFALSILALWILF. In terms of domain architecture, CN hydrolase spans 181–400; sequence AQSAVSQDFD…AIITPFVSSR (220 aa). The Proton acceptor role is filled by glutamate 222. Lysine 283 is an active-site residue. Cysteine 332 functions as the Nucleophile in the catalytic mechanism. Residues 377-397 form a helical membrane-spanning segment; the sequence is YGSVIFHATNLSPAAIITPFV.

This sequence belongs to the CN hydrolase family. Apolipoprotein N-acyltransferase subfamily.

The protein localises to the cell inner membrane. The catalysed reaction is N-terminal S-1,2-diacyl-sn-glyceryl-L-cysteinyl-[lipoprotein] + a glycerophospholipid = N-acyl-S-1,2-diacyl-sn-glyceryl-L-cysteinyl-[lipoprotein] + a 2-acyl-sn-glycero-3-phospholipid + H(+). It functions in the pathway protein modification; lipoprotein biosynthesis (N-acyl transfer). In terms of biological role, catalyzes the phospholipid dependent N-acylation of the N-terminal cysteine of apolipoprotein, the last step in lipoprotein maturation. The chain is Apolipoprotein N-acyltransferase from Helicobacter hepaticus (strain ATCC 51449 / 3B1).